Here is a 313-residue protein sequence, read N- to C-terminus: DNA-directed RNA polymerase subunit alpha (313 aa).

Residues 1–229 are alpha N-terminal domain (alpha-NTD); sequence MNSSNLLMEC…NLFKSIGEQK (229 aa). The interval 243-313 is alpha C-terminal domain (alpha-CTD); the sequence is IKPIDPYTHI…LKNKLGIVLK (71 aa).

The protein belongs to the RNA polymerase alpha chain family. As to quaternary structure, in plastids the minimal PEP RNA polymerase catalytic core is composed of four subunits: alpha, beta, beta', and beta''. When a (nuclear-encoded) sigma factor is associated with the core the holoenzyme is formed, which can initiate transcription.

The protein resides in the plastid. It is found in the chloroplast. The catalysed reaction is RNA(n) + a ribonucleoside 5'-triphosphate = RNA(n+1) + diphosphate. Functionally, DNA-dependent RNA polymerase catalyzes the transcription of DNA into RNA using the four ribonucleoside triphosphates as substrates. This chain is DNA-directed RNA polymerase subunit alpha, found in Thalassiosira pseudonana (Marine diatom).